We begin with the raw amino-acid sequence, 532 residues long: Autoinducer-2 kinase (532 aa).

Belongs to the FGGY kinase family.

Its subcellular location is the cytoplasm. It catalyses the reaction (S)-4,5-dihydroxypentane-2,3-dione + ATP = (2S)-2-hydroxy-3,4-dioxopentyl phosphate + ADP + H(+). Functionally, catalyzes the phosphorylation of autoinducer-2 (AI-2) to phospho-AI-2, which subsequently inactivates the transcriptional regulator LsrR and leads to the transcription of the lsr operon. Phosphorylates the ring-open form of (S)-4,5-dihydroxypentane-2,3-dione (DPD), which is the precursor to all AI-2 signaling molecules, at the C5 position. The protein is Autoinducer-2 kinase of Klebsiella pneumoniae subsp. pneumoniae (strain ATCC 700721 / MGH 78578).